The chain runs to 327 residues: Guanine nucleotide-binding protein subunit beta-like protein 1 (327 aa).

WD repeat units lie at residues 16–54 (LRGT…IWSL), 58–97 (RAVT…LWDL), 103–145 (AVVD…ILEM), 153–195 (ALKP…LWDV), 200–237 (VCSR…VWSL), 242–282 (ALQV…VFHW), and 286–323 (QPLA…LWSL).

Ubiquitous. Highly expressed in heart, liver, skeletal muscle, kidney, spleen, thymus and pancreas. Detected at low levels in lung, placenta and brain.

The protein localises to the cytoplasm. It localises to the nucleus. In terms of biological role, acts as a critical regulator of DNA damage response (DDR) signaling via specifically regulating phosphatidylinositol 3-kinase-related protein kinase (PIKK) family proteins. In Homo sapiens (Human), this protein is Guanine nucleotide-binding protein subunit beta-like protein 1.